The following is a 292-amino-acid chain: Protease HtpX (292 aa).

2 consecutive transmembrane segments (helical) span residues 5 to 25 (VVLF…VMSV) and 35 to 55 (GLLV…LLLS). His-140 is a Zn(2+) binding site. Residue Glu-141 is part of the active site. His-144 lines the Zn(2+) pocket. Transmembrane regions (helical) follow at residues 155-175 (LLQG…GGII) and 193-213 (IIVF…AMWF). Glu-218 contributes to the Zn(2+) binding site.

This sequence belongs to the peptidase M48B family. Zn(2+) is required as a cofactor.

It localises to the cell inner membrane. The sequence is that of Protease HtpX from Xanthomonas campestris pv. campestris (strain 8004).